The sequence spans 461 residues: Argininosuccinate lyase (461 aa).

The protein belongs to the lyase 1 family. Argininosuccinate lyase subfamily.

Its subcellular location is the cytoplasm. It carries out the reaction 2-(N(omega)-L-arginino)succinate = fumarate + L-arginine. Its pathway is amino-acid biosynthesis; L-arginine biosynthesis; L-arginine from L-ornithine and carbamoyl phosphate: step 3/3. In Streptococcus thermophilus (strain CNRZ 1066), this protein is Argininosuccinate lyase.